Here is a 273-residue protein sequence, read N- to C-terminus: 4-hydroxy-tetrahydrodipicolinate reductase (273 aa).

Residues 12 to 17 and Glu-38 contribute to the NAD(+) site; that span reads GAGGRM. Residue Arg-39 coordinates NADP(+). NAD(+) is bound by residues 102–104 and 126–129; these read GTT and AANF. Catalysis depends on His-159, which acts as the Proton donor/acceptor. (S)-2,3,4,5-tetrahydrodipicolinate is bound at residue His-160. Lys-163 (proton donor) is an active-site residue. 169–170 serves as a coordination point for (S)-2,3,4,5-tetrahydrodipicolinate; the sequence is GT.

It belongs to the DapB family. As to quaternary structure, homotetramer.

The protein localises to the cytoplasm. It catalyses the reaction (S)-2,3,4,5-tetrahydrodipicolinate + NAD(+) + H2O = (2S,4S)-4-hydroxy-2,3,4,5-tetrahydrodipicolinate + NADH + H(+). It carries out the reaction (S)-2,3,4,5-tetrahydrodipicolinate + NADP(+) + H2O = (2S,4S)-4-hydroxy-2,3,4,5-tetrahydrodipicolinate + NADPH + H(+). It participates in amino-acid biosynthesis; L-lysine biosynthesis via DAP pathway; (S)-tetrahydrodipicolinate from L-aspartate: step 4/4. Its function is as follows. Catalyzes the conversion of 4-hydroxy-tetrahydrodipicolinate (HTPA) to tetrahydrodipicolinate. In Shigella flexneri, this protein is 4-hydroxy-tetrahydrodipicolinate reductase.